The sequence spans 403 residues: Phosphoglycerate kinase (403 aa).

Residues Asp21–Asn23, Arg36, His59–Arg62, Arg119, and Arg159 contribute to the substrate site. Residues Lys214, Gly301, Glu332, and Gly359 to Ser362 contribute to the ATP site.

This sequence belongs to the phosphoglycerate kinase family. In terms of assembly, monomer.

Its subcellular location is the cytoplasm. The catalysed reaction is (2R)-3-phosphoglycerate + ATP = (2R)-3-phospho-glyceroyl phosphate + ADP. Its pathway is carbohydrate degradation; glycolysis; pyruvate from D-glyceraldehyde 3-phosphate: step 2/5. This is Phosphoglycerate kinase from Lactobacillus acidophilus (strain ATCC 700396 / NCK56 / N2 / NCFM).